Here is a 506-residue protein sequence, read N- to C-terminus: Plant intracellular Ras-group-related LRR protein 1 (506 aa).

Positions threonine 24–histidine 48 are disordered. Residues lysine 143–glutamate 193 are a coiled coil. 10 LRR repeats span residues glutamate 203 to lysine 225, isoleucine 226 to leucine 249, asparagine 251 to leucine 272, serine 273 to cysteine 295, serine 297 to leucine 319, valine 320 to methionine 342, serine 344 to leucine 364, leucine 365 to aspartate 389, leucine 390 to threonine 412, and valine 414 to glutamine 436. Positions glycine 437–tryptophan 449 match the GVYW motif.

Belongs to the SHOC2 family. Widely expressed.

Functionally, leucine-rich repeat protein that likely mediates protein interactions, possibly in the context of signal transduction. PIRL1 acts redundantly with PIRL9 in the differentiation of microspores into pollen. The protein is Plant intracellular Ras-group-related LRR protein 1 (PIRL1) of Arabidopsis thaliana (Mouse-ear cress).